The following is a 704-amino-acid chain: Glycine--tRNA ligase beta subunit (704 aa).

The protein belongs to the class-II aminoacyl-tRNA synthetase family. Tetramer of two alpha and two beta subunits.

The protein localises to the cytoplasm. It catalyses the reaction tRNA(Gly) + glycine + ATP = glycyl-tRNA(Gly) + AMP + diphosphate. In Delftia acidovorans (strain DSM 14801 / SPH-1), this protein is Glycine--tRNA ligase beta subunit.